A 92-amino-acid chain; its full sequence is UPF0473 protein BC_4380 (92 aa).

It belongs to the UPF0473 family.

This Bacillus cereus (strain ATCC 14579 / DSM 31 / CCUG 7414 / JCM 2152 / NBRC 15305 / NCIMB 9373 / NCTC 2599 / NRRL B-3711) protein is UPF0473 protein BC_4380.